The primary structure comprises 367 residues: Phosphoribosylaminoimidazole-succinocarboxamide synthase (367 aa).

It belongs to the SAICAR synthetase family.

The catalysed reaction is 5-amino-1-(5-phospho-D-ribosyl)imidazole-4-carboxylate + L-aspartate + ATP = (2S)-2-[5-amino-1-(5-phospho-beta-D-ribosyl)imidazole-4-carboxamido]succinate + ADP + phosphate + 2 H(+). It functions in the pathway purine metabolism; IMP biosynthesis via de novo pathway; 5-amino-1-(5-phospho-D-ribosyl)imidazole-4-carboxamide from 5-amino-1-(5-phospho-D-ribosyl)imidazole-4-carboxylate: step 1/2. The polypeptide is Phosphoribosylaminoimidazole-succinocarboxamide synthase (Aliivibrio fischeri (strain MJ11) (Vibrio fischeri)).